Reading from the N-terminus, the 310-residue chain is ADP-L-glycero-D-manno-heptose-6-epimerase (310 aa).

Residues 10–11 (FI), 31–32 (DN), Lys-38, Lys-53, 75–79 (EGACS), and Asn-92 contribute to the NADP(+) site. The Proton acceptor role is filled by Tyr-140. Residue Lys-144 coordinates NADP(+). A substrate-binding site is contributed by Asn-169. NADP(+)-binding residues include Val-170 and Lys-178. Lys-178 serves as the catalytic Proton acceptor. Substrate contacts are provided by residues Ser-180, His-187, 201 to 204 (FSGS), Arg-209, and Tyr-272.

This sequence belongs to the NAD(P)-dependent epimerase/dehydratase family. HldD subfamily. As to quaternary structure, homopentamer. NADP(+) serves as cofactor.

It carries out the reaction ADP-D-glycero-beta-D-manno-heptose = ADP-L-glycero-beta-D-manno-heptose. Its pathway is nucleotide-sugar biosynthesis; ADP-L-glycero-beta-D-manno-heptose biosynthesis; ADP-L-glycero-beta-D-manno-heptose from D-glycero-beta-D-manno-heptose 7-phosphate: step 4/4. In terms of biological role, catalyzes the interconversion between ADP-D-glycero-beta-D-manno-heptose and ADP-L-glycero-beta-D-manno-heptose via an epimerization at carbon 6 of the heptose. In Pectobacterium carotovorum subsp. carotovorum (strain PC1), this protein is ADP-L-glycero-D-manno-heptose-6-epimerase.